Here is a 1145-residue protein sequence, read N- to C-terminus: Protein sumv-2 (1145 aa).

The segment covering 1–13 (MKPGRKSLPKKNR) has biased composition (basic residues). 5 disordered regions span residues 1–310 (MKPG…APPA), 429–464 (QSRT…QKAR), 999–1025 (HSAS…AGSE), 1040–1059 (QIAA…PRTE), and 1073–1145 (ITTG…ISLI). The segment covering 14 to 34 (ASNITEKMPTTSTEAQSSSSK) has biased composition (polar residues). Basic and acidic residues-rich tracts occupy residues 73-104 (KTTE…EPRK) and 216-225 (VPEKKPKIED). A compositionally biased stretch (low complexity) spans 226-248 (APTTSSPKKSTPTSAPPTRASAR). The span at 455–464 (GDEKRQQKAR) shows a compositional bias: basic and acidic residues. The span at 999–1013 (HSASSSAAPSPVGAS) shows a compositional bias: low complexity. Residues 1091–1102 (VIERGDFRDHRP) are compositionally biased toward basic and acidic residues. Pro residues predominate over residues 1121-1136 (QQPPLPSPAPPPPRGP).

In terms of biological role, influences the activity of genes involved in vulval development. The chain is Protein sumv-2 from Caenorhabditis elegans.